A 176-amino-acid chain; its full sequence is ATP-dependent protease subunit HslV (176 aa).

The active site involves T6. S161, C164, and T167 together coordinate Na(+).

It belongs to the peptidase T1B family. HslV subfamily. In terms of assembly, a double ring-shaped homohexamer of HslV is capped on each side by a ring-shaped HslU homohexamer. The assembly of the HslU/HslV complex is dependent on binding of ATP.

It is found in the cytoplasm. It catalyses the reaction ATP-dependent cleavage of peptide bonds with broad specificity.. Its activity is regulated as follows. Allosterically activated by HslU binding. Its function is as follows. Protease subunit of a proteasome-like degradation complex believed to be a general protein degrading machinery. In Thermosipho africanus (strain TCF52B), this protein is ATP-dependent protease subunit HslV.